A 567-amino-acid chain; its full sequence is Urease subunit alpha (567 aa).

Residues glycine 129–phenylalanine 567 form the Urease domain. Histidine 134, histidine 136, and lysine 217 together coordinate Ni(2+). Lysine 217 is modified (N6-carboxylysine). Histidine 219 contributes to the substrate binding site. Residues histidine 246 and histidine 272 each contribute to the Ni(2+) site. Histidine 320 functions as the Proton donor in the catalytic mechanism. Aspartate 360 contacts Ni(2+).

Belongs to the metallo-dependent hydrolases superfamily. Urease alpha subunit family. As to quaternary structure, heterotrimer of UreA (gamma), UreB (beta) and UreC (alpha) subunits. Three heterotrimers associate to form the active enzyme. Ni cation serves as cofactor. In terms of processing, carboxylation allows a single lysine to coordinate two nickel ions.

The protein resides in the cytoplasm. It carries out the reaction urea + 2 H2O + H(+) = hydrogencarbonate + 2 NH4(+). It participates in nitrogen metabolism; urea degradation; CO(2) and NH(3) from urea (urease route): step 1/1. This chain is Urease subunit alpha, found in Pseudomonas putida (strain ATCC 700007 / DSM 6899 / JCM 31910 / BCRC 17059 / LMG 24140 / F1).